Reading from the N-terminus, the 446-residue chain is Cyclin-F2-2 (446 aa).

The disordered stretch occupies residues 191-216; the sequence is YNGDNDAPAPDNSTASRPQLCAPYDD.

This sequence belongs to the cyclin family. Cyclin F subfamily.

In Oryza sativa subsp. japonica (Rice), this protein is Cyclin-F2-2 (CYCF2-2).